We begin with the raw amino-acid sequence, 549 residues long: Glucose-6-phosphate isomerase (549 aa).

E355 (proton donor) is an active-site residue. Active-site residues include H386 and K514.

This sequence belongs to the GPI family.

It localises to the cytoplasm. It catalyses the reaction alpha-D-glucose 6-phosphate = beta-D-fructose 6-phosphate. It functions in the pathway carbohydrate biosynthesis; gluconeogenesis. The protein operates within carbohydrate degradation; glycolysis; D-glyceraldehyde 3-phosphate and glycerone phosphate from D-glucose: step 2/4. Functionally, catalyzes the reversible isomerization of glucose-6-phosphate to fructose-6-phosphate. The chain is Glucose-6-phosphate isomerase from Buchnera aphidicola subsp. Acyrthosiphon pisum (strain APS) (Acyrthosiphon pisum symbiotic bacterium).